Here is a 565-residue protein sequence, read N- to C-terminus: Carboxylesterase 1D (565 aa).

Positions 1–18 are cleaved as a signal peptide; sequence MGLYPLIWLSLAACTAWG. An N-linked (GlcNAc...) asparagine glycan is attached at Asn79. An intrachain disulfide couples Cys87 to Cys116. Ser221 (acyl-ester intermediate) is an active-site residue. Residues Cys273 and Cys284 are joined by a disulfide bond. Glu353 (charge relay system) is an active-site residue. The residue at position 382 (Lys382) is an N6-succinyllysine. His466 acts as the Charge relay system in catalysis. Asn489 carries N-linked (GlcNAc...) asparagine glycosylation. A Prevents secretion from ER motif is present at residues 562-565; sequence HVEL.

It belongs to the type-B carboxylesterase/lipase family. Homotrimer. In terms of tissue distribution, highest expression occurs in liver with lower levels in adipose tissue, kidney, heart, intestine, lung, testis and thymus.

It is found in the endoplasmic reticulum lumen. The protein localises to the cytoplasm. It localises to the cytosol. The protein resides in the lipid droplet. Its subcellular location is the microsome. The catalysed reaction is a carboxylic ester + H2O = an alcohol + a carboxylate + H(+). It catalyses the reaction a long-chain fatty acyl ethyl ester + H2O = a long-chain fatty acid + ethanol + H(+). The enzyme catalyses all-trans-retinyl hexadecanoate + H2O = all-trans-retinol + hexadecanoate + H(+). Functionally, major lipase in white adipose tissue. Involved in the metabolism of xenobiotics and of natural substrates. Hydrolyzes triacylglycerols and monoacylglycerols, with a preference for monoacylglycerols. The susceptibility of the substrate increases with decreasing acyl chain length of the fatty acid moiety. Catalyzes the synthesis of fatty acid ethyl esters. Hydrolyzes retinyl esters. The polypeptide is Carboxylesterase 1D (Mus musculus (Mouse)).